Here is a 164-residue protein sequence, read N- to C-terminus: Ubiquitin-conjugating enzyme E2 2 (164 aa).

The region spanning 4–150 is the UBC core domain; that stretch reads PARRRLMRDF…VKETVEKSWE (147 aa). The active-site Glycyl thioester intermediate is the Cys-88.

It belongs to the ubiquitin-conjugating enzyme family.

It localises to the cytoplasm. The protein resides in the nucleus. It carries out the reaction S-ubiquitinyl-[E1 ubiquitin-activating enzyme]-L-cysteine + [E2 ubiquitin-conjugating enzyme]-L-cysteine = [E1 ubiquitin-activating enzyme]-L-cysteine + S-ubiquitinyl-[E2 ubiquitin-conjugating enzyme]-L-cysteine.. Its pathway is protein modification; protein ubiquitination. Functionally, catalyzes the covalent attachment of ubiquitin to other proteins. Plays a role in transcription regulation by catalyzing the monoubiquitination of histone H2B to form H2BK123ub1. H2BK123ub1 gives a specific tag for epigenetic transcriptional activation and is also a prerequisite for H3K4me and H3K79me formation. Also involved in postreplication repair of UV-damaged DNA, in N-end rule-dependent protein degradation and in sporulation. The sequence is that of Ubiquitin-conjugating enzyme E2 2 (UBC2) from Kluyveromyces lactis (strain ATCC 8585 / CBS 2359 / DSM 70799 / NBRC 1267 / NRRL Y-1140 / WM37) (Yeast).